Here is a 98-residue protein sequence, read N- to C-terminus: C-X-C motif chemokine 10 (98 aa).

The first 21 residues, 1–21 (MNQTAILICCLVFLTLSGIQG), serve as a signal peptide directing secretion. R26 bears the Citrulline mark. Disulfide bonds link C30–C57 and C32–C74.

It belongs to the intercrine alpha (chemokine CxC) family.

The protein localises to the secreted. Its function is as follows. Chemotactic for monocytes and T-lymphocytes. Binds to CXCR3. This chain is C-X-C motif chemokine 10 (CXCL10), found in Macaca mulatta (Rhesus macaque).